A 352-amino-acid chain; its full sequence is Photosystem II D2 protein (352 aa).

A helical membrane pass occupies residues 40–60 (CAYLALGGWLTGTTFVTSWYT). His117 serves as a coordination point for chlorophyll a. The chain crosses the membrane as a helical span at residues 124-140 (GFMLRQFEIARLVGVRP). The pheophytin a site is built by Gln129 and Asn142. A helical membrane pass occupies residues 152–165 (VFVSVFLIYPLGQS). His197 provides a ligand contact to chlorophyll a. Residues 207–227 (GALLCAIHGATVENTLFQDGE) traverse the membrane as a helical segment. Residues His214 and Phe261 each coordinate a plastoquinone. His214 contacts Fe cation. Position 268 (His268) interacts with Fe cation. A helical membrane pass occupies residues 278–294 (GLWMSSIGVVGLALNLR).

The protein belongs to the reaction center PufL/M/PsbA/D family. PSII is composed of 1 copy each of membrane proteins PsbA, PsbB, PsbC, PsbD, PsbE, PsbF, PsbH, PsbI, PsbJ, PsbK, PsbL, PsbM, PsbT, PsbX, PsbY, PsbZ, Psb30/Ycf12, peripheral proteins PsbO, CyanoQ (PsbQ), PsbU, PsbV and a large number of cofactors. It forms dimeric complexes. It depends on The D1/D2 heterodimer binds P680, chlorophylls that are the primary electron donor of PSII, and subsequent electron acceptors. It shares a non-heme iron and each subunit binds pheophytin, quinone, additional chlorophylls, carotenoids and lipids. There is also a Cl(-1) ion associated with D1 and D2, which is required for oxygen evolution. The PSII complex binds additional chlorophylls, carotenoids and specific lipids. as a cofactor.

It is found in the cellular thylakoid membrane. The enzyme catalyses 2 a plastoquinone + 4 hnu + 2 H2O = 2 a plastoquinol + O2. Functionally, photosystem II (PSII) is a light-driven water:plastoquinone oxidoreductase that uses light energy to abstract electrons from H(2)O, generating O(2) and a proton gradient subsequently used for ATP formation. It consists of a core antenna complex that captures photons, and an electron transfer chain that converts photonic excitation into a charge separation. The D1/D2 (PsbA/PsbD) reaction center heterodimer binds P680, the primary electron donor of PSII as well as several subsequent electron acceptors. D2 is needed for assembly of a stable PSII complex. The polypeptide is Photosystem II D2 protein (Synechococcus sp. (strain JA-2-3B'a(2-13)) (Cyanobacteria bacterium Yellowstone B-Prime)).